The primary structure comprises 390 residues: Chorismate synthase (390 aa).

2 residues coordinate NADP(+): Arg-39 and Arg-45. Residues 132 to 134 (RSS), 253 to 254 (NA), Gly-298, 313 to 317 (KPIPT), and Arg-339 each bind FMN.

The protein belongs to the chorismate synthase family. In terms of assembly, homotetramer. Requires FMNH2 as cofactor.

It carries out the reaction 5-O-(1-carboxyvinyl)-3-phosphoshikimate = chorismate + phosphate. The protein operates within metabolic intermediate biosynthesis; chorismate biosynthesis; chorismate from D-erythrose 4-phosphate and phosphoenolpyruvate: step 7/7. Functionally, catalyzes the anti-1,4-elimination of the C-3 phosphate and the C-6 proR hydrogen from 5-enolpyruvylshikimate-3-phosphate (EPSP) to yield chorismate, which is the branch point compound that serves as the starting substrate for the three terminal pathways of aromatic amino acid biosynthesis. This reaction introduces a second double bond into the aromatic ring system. This chain is Chorismate synthase, found in Bacillus pumilus (strain SAFR-032).